Consider the following 1067-residue polypeptide: Glycine--tRNA ligase, chloroplastic/mitochondrial 2 (1067 aa).

The transit peptide at 1–50 (MAILHFSLPLIVSFLRPHASPRFFLLPRSLSQSPFLSRRRFHRTSAVSSA) directs the protein to the chloroplast and mitochondrion. Glu-513 provides a ligand contact to substrate. Residues 589-596 (RNSGINIE), 619-624 (LVVPQN), 744-745 (RL), and 859-862 (GLRR) contribute to the ATP site. 624–628 (NLLNE) is a substrate binding site. 855 to 859 (NDPFG) is a binding site for substrate.

It belongs to the class-II aminoacyl-tRNA synthetase family. Homodimer.

The protein localises to the plastid. Its subcellular location is the chloroplast. The protein resides in the mitochondrion. It carries out the reaction tRNA(Gly) + glycine + ATP = glycyl-tRNA(Gly) + AMP + diphosphate. Catalyzes the attachment of glycine to tRNA(Gly). Is also able produce diadenosine tetraphosphate (Ap4A), a universal pleiotropic signaling molecule needed for cell regulation pathways, by direct condensation of 2 ATPs. The chain is Glycine--tRNA ligase, chloroplastic/mitochondrial 2 from Arabidopsis thaliana (Mouse-ear cress).